Here is a 188-residue protein sequence, read N- to C-terminus: uncharacterized protein (188 aa).

The disordered stretch occupies residues Asn57 to Arg80.

The protein belongs to the transposase 25 family.

This is an uncharacterized protein from Sinorhizobium fredii (strain NBRC 101917 / NGR234).